Here is a 90-residue protein sequence, read N- to C-terminus: Small ribosomal subunit protein uS17 (90 aa).

The protein belongs to the universal ribosomal protein uS17 family. Part of the 30S ribosomal subunit.

In terms of biological role, one of the primary rRNA binding proteins, it binds specifically to the 5'-end of 16S ribosomal RNA. This is Small ribosomal subunit protein uS17 from Burkholderia cenocepacia (strain ATCC BAA-245 / DSM 16553 / LMG 16656 / NCTC 13227 / J2315 / CF5610) (Burkholderia cepacia (strain J2315)).